The sequence spans 316 residues: Probable cell division protein WhiA (316 aa).

The H-T-H motif DNA-binding region spans 275 to 309 (TLKELGEMVSGGKISKSGINHRLRKIDEIAEKLRA).

The protein belongs to the WhiA family.

Its function is as follows. Involved in cell division and chromosome segregation. This is Probable cell division protein WhiA from Bacillus cytotoxicus (strain DSM 22905 / CIP 110041 / 391-98 / NVH 391-98).